Here is a 122-residue protein sequence, read N- to C-terminus: UPF0102 protein Mpe_A3766 (122 aa).

This sequence belongs to the UPF0102 family.

In Methylibium petroleiphilum (strain ATCC BAA-1232 / LMG 22953 / PM1), this protein is UPF0102 protein Mpe_A3766.